Reading from the N-terminus, the 83-residue chain is Small ribosomal subunit protein eS21 (83 aa).

This sequence belongs to the eukaryotic ribosomal protein eS21 family. In terms of assembly, component of the 40S small ribosomal subunit. Interacts with sta.

The protein localises to the cytoplasm. It is found in the cytosol. Its subcellular location is the rough endoplasmic reticulum. Functionally, may be an associated component of the ribosome rather than a core structural subunit. May act as a translation initiation factor. Has a role in regulation of cell proliferation in the hematopoietic organs and the imaginal disks of larva. The sequence is that of Small ribosomal subunit protein eS21 (RpS21) from Drosophila simulans (Fruit fly).